The primary structure comprises 372 residues: Cytoplasmic envelopment protein 2 (372 aa).

The disordered stretch occupies residues 1–38; that stretch reads MAQRALWRPQATPGPPGAAAPPGHRGAPPDARAPDPGP. Low complexity predominate over residues 20–30; that stretch reads APPGHRGAPPD.

The protein belongs to the herpesviridae cytoplasmic envelopment protein 2 family. In terms of assembly, interacts with cytoplasmic envelopment protein 3 and with the capsid.

It localises to the virion tegument. The protein localises to the host cytoplasm. It is found in the host nucleus. Plays a critical role in cytoplasmic virus egress. Participates in the final step of tegumentation and envelope acquisition within the host cytoplasm by directly interacting with the capsid. Upon virion binding to target cell, a signaling cascade is triggered to disrupt the interaction with the capsid, thereby preparing capsid uncoating. The chain is Cytoplasmic envelopment protein 2 (UL16) from Human herpesvirus 2 (strain HG52) (HHV-2).